Reading from the N-terminus, the 136-residue chain is Histone H3.1/H3.2 (136 aa).

The tract at residues 1–42 (MARTKQTARKSTGGKAPRKQLASKAARKAAPATGGVKKPHRY) is disordered. K5 bears the N6,N6,N6-trimethyllysine; alternate mark. The residue at position 5 (K5) is an N6,N6-dimethyllysine; alternate. An N6-methyllysine; alternate mark is found at K5 and K10. An N6-acetyllysine; alternate modification is found at K10. Position 11 is a phosphoserine (S11). An N6,N6-dimethyllysine; alternate modification is found at K15. N6-acetyllysine; alternate occurs at positions 15, 19, 24, 28, and 37. N6-methyllysine; alternate is present on residues K19, K24, K28, and K37. The span at 19–32 (KQLASKAARKAAPA) shows a compositional bias: low complexity. Residues K28 and K37 each carry the N6,N6,N6-trimethyllysine; alternate modification. K28 and K37 each carry N6,N6-dimethyllysine; alternate. N6-acetyllysine is present on residues K57 and K65. N6,N6,N6-trimethyllysine; alternate is present on K80. An N6,N6-dimethyllysine; alternate modification is found at K80. At K80 the chain carries N6-methyllysine; alternate.

The protein belongs to the histone H3 family. In terms of assembly, the nucleosome is a histone octamer containing two molecules each of H2A, H2B, H3 and H4 assembled in one H3-H4 heterotetramer and two H2A-H2B heterodimers. The octamer wraps approximately 147 bp of DNA. In terms of processing, phosphorylated by ark1 to form H3S10ph in a cell cycle-dependent manner during mitosis and meiosis. H3S10ph is also formed by ssp2, promotes subsequent H3K14ac formation by gcn5, and is required for transcriptional activation through TBP recruitment to the promoters. Dephosphorylation is performed by sds21. Post-translationally, mono-, di- and trimethylated by the COMPASS complex to form H3K4me1/2/3. H3K4me activates gene expression by regulating transcription elongation and plays a role in telomere length maintenance. H3K4me enrichment correlates with transcription levels, and occurs in a 5' to 3' gradient with H3K4me3 enrichment at the 5'-end of genes, shifting to H3K4me2 and then H3K4me1. Methylated by clr4 to form H3K9me1. H3K9me1 represents a specific tag for epigenetic transcriptional repression by recruiting swi6/HP1 to methylated histones. Targeting to histone probably involves clr3 and rik1. Essential for silencing of centromeres and directional switching of the mating type. Methylated by set2 to form H3K36me. H3K36me represses gene expression. Methylated by dot1 to form H3K79me. H3K79me is required for association of SIR proteins with telomeric regions and for telomeric silencing. The COMPASS-mediated formation of H3K4me2/3 and the dot1-mediated formation of H3K79me require H2BK123ub1. Acetylation of histone H3 leads to transcriptional activation. H3K14ac formation by gcn5 is promoted by H3S10ph. H3K14ac can also be formed by esa1. H3K56ac formation occurs predominantly in newly synthesized H3 molecules during G1, S and G2/M of the cell cycle and may be involved in DNA repair.

The protein localises to the nucleus. The protein resides in the chromosome. Its function is as follows. Core component of nucleosome. Nucleosomes wrap and compact DNA into chromatin, limiting DNA accessibility to the cellular machineries which require DNA as a template. Histones thereby play a central role in transcription regulation, DNA repair, DNA replication and chromosomal stability. DNA accessibility is regulated via a complex set of post-translational modifications of histones, also called histone code, and nucleosome remodeling. The sequence is that of Histone H3.1/H3.2 (hht1) from Schizosaccharomyces pombe (strain 972 / ATCC 24843) (Fission yeast).